A 592-amino-acid polypeptide reads, in one-letter code: Putative RING finger protein ORF9 (592 aa).

An RING-type zinc finger spans residues cysteine 12–arginine 49. A coiled-coil region spans residues tryptophan 414–leucine 441.

The sequence is that of Putative RING finger protein ORF9 from Ostreid herpesvirus 1 (isolate France) (OsHV-1).